A 269-amino-acid polypeptide reads, in one-letter code: G-protein coupled receptor homolog C3 (269 aa).

Cysteine 28 and cysteine 107 form a disulfide bridge. The next 5 membrane-spanning stretches (helical) occupy residues 30–50 (IMSV…TLMS), 71–91 (IGIL…SPVS), 123–143 (LMQI…FVYC), 165–185 (IVLM…IVLM), and 200–220 (HLCL…ISLA).

Belongs to the G-protein coupled receptor 1 family.

It is found in the host cell membrane. This Sus scrofa (Pig) protein is G-protein coupled receptor homolog C3.